The sequence spans 226 residues: UPF0758 protein SPs0978 (226 aa).

In terms of domain architecture, MPN spans 103–225 (SVLTSVQVAE…YYSFREKSTL (123 aa)). Zn(2+) is bound by residues H174, H176, and D187. The JAMM motif signature appears at 174–187 (HNHPSGNIEPSSND).

This sequence belongs to the UPF0758 family.

This is UPF0758 protein SPs0978 from Streptococcus pyogenes serotype M3 (strain SSI-1).